Here is a 196-residue protein sequence, read N- to C-terminus: ATP-dependent Clp protease proteolytic subunit 1 (196 aa).

The Nucleophile role is filled by S96. Residue H121 is part of the active site.

This sequence belongs to the peptidase S14 family. Fourteen ClpP subunits assemble into 2 heptameric rings which stack back to back to give a disk-like structure with a central cavity, resembling the structure of eukaryotic proteasomes.

The protein resides in the cytoplasm. The enzyme catalyses Hydrolysis of proteins to small peptides in the presence of ATP and magnesium. alpha-casein is the usual test substrate. In the absence of ATP, only oligopeptides shorter than five residues are hydrolyzed (such as succinyl-Leu-Tyr-|-NHMec, and Leu-Tyr-Leu-|-Tyr-Trp, in which cleavage of the -Tyr-|-Leu- and -Tyr-|-Trp bonds also occurs).. Its function is as follows. Cleaves peptides in various proteins in a process that requires ATP hydrolysis. Has a chymotrypsin-like activity. Plays a major role in the degradation of misfolded proteins. The chain is ATP-dependent Clp protease proteolytic subunit 1 from Prochlorococcus marinus (strain NATL2A).